A 543-amino-acid chain; its full sequence is Cytochrome P450 monooxygenase CYP1 (543 aa).

A helical transmembrane segment spans residues 40 to 60 (SSFFTRILIAFIGLCLLSIFS). Residues Asn210 and Asn367 are each glycosylated (N-linked (GlcNAc...) asparagine). Cys478 contacts heme. Asn517 carries N-linked (GlcNAc...) asparagine glycosylation.

Belongs to the cytochrome P450 family. The cofactor is heme.

The protein localises to the membrane. The protein operates within secondary metabolite biosynthesis. In terms of biological role, cytochrome P450 monooxygenase; part of the gene cluster that mediates the biosynthesis of a tyrosine-derived cytochalasan acting as a fungal signal recognized by resistant rice plants and leads to avirulence in Pi33 resistant rice cultivars. The first step in the pathway is catalyzed by the hybrid PKS-NRPS ACE1, assisted by the enoyl reductase RAP1, that are responsible for fusion of the tyrosine precursor and the polyketide backbone. The polyketide synthase module (PKS) of ACE1 is responsible for the synthesis of the polyketide backbone and the downstream nonribosomal peptide synthetase (NRPS) amidates the carboxyl end of the polyketide with the tyrosine precursor. Because ACE1 lacks a designated enoylreductase (ER) domain, the required activity is provided the enoyl reductase RAP1. Reduction by the hydrolyase ORFZ, followed by dehydration and intra-molecular Diels-Alder cyclization by the Diels-Alderase ORF3 then yield the required isoindolone-fused macrocycle. A number of oxidative steps catalyzed by the tailoring enzymes identified within the cluster, including cytochrome P450 monooxygenases CYP1 to CYP4, the FAD-linked oxidoreductase OXR2 and the short-chain dehydrogenase/reductase OXR1, are further required to afford the final cytochalasans that confer avirulence and which have still to be identified. The monooxygenase CYP1 has been shown to be a site-selective C-18 hydroxylase whereas the function of CYP3 is the site-selective epoxidation of the C-6/C-7 olefin that is present in some intermediate compounds. Finally, SYN2 and RAP2 are not required for avirulence in Pi33 resistant rice cultivars. This is Cytochrome P450 monooxygenase CYP1 from Pyricularia oryzae (strain 70-15 / ATCC MYA-4617 / FGSC 8958) (Rice blast fungus).